A 192-amino-acid polypeptide reads, in one-letter code: Signal peptidase complex catalytic subunit SEC11C (192 aa).

The Cytoplasmic segment spans residues 1 to 28; sequence MVRAGAVGAHLPASGLDIFGDLKKMNKR. A helical; Signal-anchor for type II membrane protein transmembrane segment spans residues 29 to 48; that stretch reads QLYYQVLNFAMIVSSALMIW. At 49-192 the chain is on the lumenal side; sequence KGLIVLTGSE…GAYVLLKRES (144 aa). Catalysis depends on charge relay system residues Ser68, His108, and Asp134. The tract at residues 177-188 is C-terminal short (CTS) helix; sequence ALLAVMGAYVLL.

The protein belongs to the peptidase S26B family. In terms of assembly, component of the signal peptidase complex paralog C (SPC-C) composed of a catalytic subunit SEC11C and three accessory subunits SPCS1, SPCS2 and SPCS3. Within the complex, interacts with SPCS2 and SPCS3. The complex induces a local thinning of the ER membrane which is used to measure the length of the signal peptide (SP) h-region of protein substrates. This ensures the selectivity of the complex towards h-regions shorter than 18-20 amino acids. In terms of processing, may undergo processing at the N-terminus.

It localises to the endoplasmic reticulum membrane. It catalyses the reaction Cleavage of hydrophobic, N-terminal signal or leader sequences from secreted and periplasmic proteins.. In terms of biological role, catalytic component of the signal peptidase complex (SPC) which catalyzes the cleavage of N-terminal signal sequences from nascent proteins as they are translocated into the lumen of the endoplasmic reticulum. Specifically cleaves N-terminal signal peptides that contain a hydrophobic alpha-helix (h-region) shorter than 18-20 amino acids. The polypeptide is Signal peptidase complex catalytic subunit SEC11C (SEC11C) (Homo sapiens (Human)).